The chain runs to 417 residues: Serine hydroxymethyltransferase (417 aa).

(6S)-5,6,7,8-tetrahydrofolate is bound by residues leucine 122 and 126-128 (GHL). An N6-(pyridoxal phosphate)lysine modification is found at lysine 230. Residue 355-357 (SPF) participates in (6S)-5,6,7,8-tetrahydrofolate binding.

It belongs to the SHMT family. In terms of assembly, homodimer. Pyridoxal 5'-phosphate is required as a cofactor.

It is found in the cytoplasm. It carries out the reaction (6R)-5,10-methylene-5,6,7,8-tetrahydrofolate + glycine + H2O = (6S)-5,6,7,8-tetrahydrofolate + L-serine. It participates in one-carbon metabolism; tetrahydrofolate interconversion. Its pathway is amino-acid biosynthesis; glycine biosynthesis; glycine from L-serine: step 1/1. Its function is as follows. Catalyzes the reversible interconversion of serine and glycine with tetrahydrofolate (THF) serving as the one-carbon carrier. This reaction serves as the major source of one-carbon groups required for the biosynthesis of purines, thymidylate, methionine, and other important biomolecules. Also exhibits THF-independent aldolase activity toward beta-hydroxyamino acids, producing glycine and aldehydes, via a retro-aldol mechanism. This Francisella tularensis subsp. mediasiatica (strain FSC147) protein is Serine hydroxymethyltransferase.